Here is a 583-residue protein sequence, read N- to C-terminus: Aspartate--tRNA ligase (583 aa).

E174 serves as a coordination point for L-aspartate. The segment at 198–201 (QITK) is aspartate. R220 provides a ligand contact to L-aspartate. ATP-binding positions include 220 to 222 (RDE) and Q229. H443 contributes to the L-aspartate binding site. E477 lines the ATP pocket. Position 484 (R484) interacts with L-aspartate. ATP is bound at residue 529–532 (GLDR).

This sequence belongs to the class-II aminoacyl-tRNA synthetase family. Type 1 subfamily. As to quaternary structure, homodimer.

The protein localises to the cytoplasm. It carries out the reaction tRNA(Asp) + L-aspartate + ATP = L-aspartyl-tRNA(Asp) + AMP + diphosphate. Catalyzes the attachment of L-aspartate to tRNA(Asp) in a two-step reaction: L-aspartate is first activated by ATP to form Asp-AMP and then transferred to the acceptor end of tRNA(Asp). The chain is Aspartate--tRNA ligase from Streptococcus agalactiae serotype III (strain NEM316).